A 196-amino-acid chain; its full sequence is Transmembrane protein 126A (196 aa).

At Met-1 to Glu-34 the chain is on the mitochondrial matrix side. The chain crosses the membrane as a helical span at residues His-35 to Phe-55. Over Arg-56–Arg-57 the chain is Mitochondrial intermembrane. A helical transmembrane segment spans residues Ile-58–Leu-78. The Mitochondrial matrix portion of the chain corresponds to Thr-79–Ser-107. The chain crosses the membrane as a helical span at residues Gly-108–Gly-128. Residues Gly-129–Lys-159 are Mitochondrial intermembrane-facing. A helical transmembrane segment spans residues Met-160–Ser-176. The Mitochondrial matrix segment spans residues Glu-177–His-196.

The protein belongs to the TMEM126 family. In terms of assembly, interacts with OXA1L; promoting cotranslational quality control in mitochondria.

The protein localises to the mitochondrion inner membrane. Functionally, protein required for the cotranslational protein quality control in the inner membrane of the mitochondria. Associates with newly synthesized polypeptides and may act as a chaperone that cooperates with OXA1L for the insertion of newly synthesized mitochondrial proteins into the inner membrane. Required for the assembly of the ND4 module of mitochondrial complex I. This chain is Transmembrane protein 126A (TMEM126A), found in Pongo abelii (Sumatran orangutan).